A 219-amino-acid chain; its full sequence is MLFRSVHHIVARFSNSTSTPIHRFFYSPSLLRRRSSFNASLISRCCSSVSDVDVARDAVVKIFSFSREPNVVQPWQTTEKEYSSSGFAISGRRILTNAHVVGDHLYLQVRKHGSPTKYKAEVKAFRYGCDLAILGIDSEEFWEDINPLELGGIPFIGETVYALGYPRGGDTISVTKGIVTRVEPQKYSHSSIKMYVYTSGGSTNKFYSGQINKKIYDGR.

Residues 1-45 (MLFRSVHHIVARFSNSTSTPIHRFFYSPSLLRRRSSFNASLISRC) constitute a chloroplast transit peptide. Residues 61–216 (KIFSFSREPN…YSGQINKKIY (156 aa)) form a serine protease region. Residues histidine 99, aspartate 130, and serine 208 each act as charge relay system in the active site.

It belongs to the peptidase S1B family.

It localises to the plastid. The protein resides in the chloroplast. Its function is as follows. Putative serine protease. The sequence is that of Putative protease Do-like 6, chloroplastic (DEGP6) from Arabidopsis thaliana (Mouse-ear cress).